The chain runs to 434 residues: 3-phosphoshikimate 1-carboxyvinyltransferase (434 aa).

3-phosphoshikimate is bound by residues lysine 22, serine 23, and arginine 27. Lysine 22 provides a ligand contact to phosphoenolpyruvate. Phosphoenolpyruvate-binding residues include glycine 93 and arginine 121. 3-phosphoshikimate-binding residues include serine 168, serine 169, glutamine 170, serine 199, aspartate 320, and lysine 347. Glutamine 170 lines the phosphoenolpyruvate pocket. Residue aspartate 320 is the Proton acceptor of the active site. Phosphoenolpyruvate-binding residues include arginine 351, arginine 394, and lysine 419.

This sequence belongs to the EPSP synthase family. Monomer.

It is found in the cytoplasm. The enzyme catalyses 3-phosphoshikimate + phosphoenolpyruvate = 5-O-(1-carboxyvinyl)-3-phosphoshikimate + phosphate. It functions in the pathway metabolic intermediate biosynthesis; chorismate biosynthesis; chorismate from D-erythrose 4-phosphate and phosphoenolpyruvate: step 6/7. In terms of biological role, catalyzes the transfer of the enolpyruvyl moiety of phosphoenolpyruvate (PEP) to the 5-hydroxyl of shikimate-3-phosphate (S3P) to produce enolpyruvyl shikimate-3-phosphate and inorganic phosphate. This chain is 3-phosphoshikimate 1-carboxyvinyltransferase, found in Burkholderia orbicola (strain AU 1054).